The primary structure comprises 481 residues: Fibrinogen beta chain (481 aa).

Residues 1–19 (MRHLWLLLLLCVFSVQTQA) form the signal peptide. A disordered region spans residues 22 to 81 (DDYDEPTDSLDARGHRPVDRRKEEPPSLRPAPPPISGGGYRARPAKATANQKKVERRPPD). Residues 31–47 (LDARGHRPVDRRKEEPP) show a composition bias toward basic and acidic residues. Residues 35–37 (GHR) are beta-chain polymerization, binding distal domain of another fibrin. Residues 149 to 213 (QAQVKENENV…SDISAQMEYC (65 aa)) adopt a coiled-coil conformation. Disulfide bonds link Cys-221–Cys-306 and Cys-231–Cys-260. The Fibrinogen C-terminal domain maps to 222-478 (NIPVVSGKEC…RMSMKIRPFF (257 aa)). N-linked (GlcNAc...) asparagine glycosylation is present at Asn-384. An intrachain disulfide couples Cys-414 to Cys-427.

In terms of assembly, heterohexamer; disulfide linked. Contains 2 sets of 3 non-identical chains (alpha, beta and gamma). The 2 heterotrimers are in head to head conformation with the N-termini in a small central domain. Post-translationally, conversion of fibrinogen to fibrin is triggered by thrombin, which cleaves fibrinopeptides A and B from alpha and beta chains, and thus exposes the N-terminal polymerization sites responsible for the formation of the soft clot.

It is found in the secreted. Its function is as follows. Cleaved by the protease thrombin to yield monomers which, together with fibrinogen alpha (FGA) and fibrinogen gamma (FGG), polymerize to form an insoluble fibrin matrix. Fibrin has a major function in hemostasis as one of the primary components of blood clots. In addition, functions during the early stages of wound repair to stabilize the lesion and guide cell migration during re-epithelialization. Was originally thought to be essential for platelet aggregation, based on in vitro studies using anticoagulated blood. However, subsequent studies have shown that it is not absolutely required for thrombus formation in vivo. Enhances expression of SELP in activated platelets via an ITGB3-dependent pathway. Maternal fibrinogen is essential for successful pregnancy. Fibrin deposition is also associated with infection, where it protects against IFNG-mediated hemorrhage. May also facilitate the immune response via both innate and T-cell mediated pathways. In Mus musculus (Mouse), this protein is Fibrinogen beta chain (Fgb).